The primary structure comprises 491 residues: Peptidyl-prolyl isomerase CWC27 (491 aa).

One can recognise a PPIase cyclophilin-type domain in the interval Thr-11–Ile-167. Composition is skewed to basic and acidic residues over residues Ala-186–Glu-202, Asp-268–Ala-298, and Ala-306–Arg-316. Disordered regions lie at residues Ala-186–Asp-427 and Arg-464–Arg-491. A coiled-coil region spans residues Ala-277–Asp-327. The segment covering Gly-323–Ser-333 has biased composition (low complexity). The segment covering Ala-352–Gly-367 has biased composition (basic residues). Composition is skewed to acidic residues over residues Asp-391 to Ala-406 and Ala-418 to Asp-427. Over residues Arg-482–Arg-491 the composition is skewed to basic residues.

It belongs to the cyclophilin-type PPIase family. CWC27 subfamily. As to quaternary structure, associated with the spliceosome.

The protein resides in the cytoplasm. It localises to the nucleus. The catalysed reaction is [protein]-peptidylproline (omega=180) = [protein]-peptidylproline (omega=0). In terms of biological role, PPIases accelerate the folding of proteins. It catalyzes the cis-trans isomerization of proline imidic peptide bonds in oligopeptides. Involved in pre-mRNA splicing. In Cryptococcus neoformans var. neoformans serotype D (strain B-3501A) (Filobasidiella neoformans), this protein is Peptidyl-prolyl isomerase CWC27 (CWC27).